The following is a 396-amino-acid chain: Phosphoglycerate kinase (396 aa).

Substrate is bound by residues 21 to 23, arginine 36, 59 to 62, arginine 119, and arginine 156; these read DFN and HLGK. Residues lysine 206, glycine 294, glutamate 325, and 352-355 each bind ATP; that span reads GGDS.

This sequence belongs to the phosphoglycerate kinase family. Monomer.

It localises to the cytoplasm. It catalyses the reaction (2R)-3-phosphoglycerate + ATP = (2R)-3-phospho-glyceroyl phosphate + ADP. The protein operates within carbohydrate degradation; glycolysis; pyruvate from D-glyceraldehyde 3-phosphate: step 2/5. This chain is Phosphoglycerate kinase, found in Listeria innocua serovar 6a (strain ATCC BAA-680 / CLIP 11262).